We begin with the raw amino-acid sequence, 895 residues long: ABC-transporter-regulating transcription factor (895 aa).

The segment at residues 69–96 (CDMCRKKKIKCDGKMPKCSHCTNYKTDC) is a DNA-binding region (zn(2)-C6 fungal-type). Positions 156–218 (HASGSNTPHN…QKESETEVEG (63 aa)) are disordered. Residues 158-207 (SGSNTPHNPQKINIPSQSQIAMSQQNSSSHYSTPRLESQSSPRTAATSPE) are compositionally biased toward polar residues. A helical transmembrane segment spans residues 648-668 (CVWLILYYPVSALVTLFANIL). The tract at residues 726–813 (ESYSKKKRKS…TGVSTNIPPN (88 aa)) is disordered. Low complexity predominate over residues 755–765 (PSTTQPTQAPS).

In terms of assembly, interacts with ncaA.

The protein resides in the nucleus. It localises to the membrane. Its function is as follows. Transcription factor that regulates expression of the genes related to ergosterol biosynthesis, including erg3B, erg24A, erg25A, as well as cyp51A that encodes a target protein of azoles. In coordination with ffmA and ncaA, is responsible for the expression of the ABC transporter abcC/cdr1B/abcG1 related to azole resistance. Directly binds both the cyp51A and abcC/cdr1B/abcG1 promoters at a conserved 34 bp region called the atrR response element (ATRE). AtrR also binds to the promoter regions of both the sterol response transcription factor srbA and atrR genes themselves, the latter suggesting the possibility that atrR is autoregulated. Also regulates iron uptake, most likely via cooperation with SrbA. AtrR is necessary for hypoxia adaptation and virulence. The sequence is that of ABC-transporter-regulating transcription factor from Aspergillus fumigatus (strain ATCC MYA-4609 / CBS 101355 / FGSC A1100 / Af293) (Neosartorya fumigata).